Here is a 759-residue protein sequence, read N- to C-terminus: uncharacterized protein (759 aa).

Disordered stretches follow at residues 1-31 (MDGNRRVRFNTDRRPYLSPLQTSFPSSTSFQ) and 188-211 (NDEGEDVKDNEQDDNIDESDPFAN). A compositionally biased stretch (low complexity) spans 17 to 31 (LSPLQTSFPSSTSFQ). Over residues 189–207 (DEGEDVKDNEQDDNIDESD) the composition is skewed to acidic residues. Helical transmembrane passes span 434–454 (YFRTWILVVFYGFASATILPM), 456–476 (FQGGWIDLPIAFILGCLVGIL), 486–505 (MYNSLFEVTGSIITSFLSRA), 517–537 (FCFSALAEGAIVLILPGYIVL), 555–575 (MFYAIIYSLFLSFGISIGAAL), 597–617 (DKWKILFVPLFTLCLLIVNQA), 620–640 (SQWPVSIFISCAGYVVNYFTA), 643–663 (FGSNPIANAIGSFAIGCLGNI), 670–690 (GVAFAAVLPAIFVQVPSGLAA), and 726–746 (LVMVQIAIGISVGLFASALVV).

It belongs to the ThrE exporter (TC 2.A.79) family.

Its subcellular location is the endoplasmic reticulum membrane. This is an uncharacterized protein from Schizosaccharomyces pombe (strain 972 / ATCC 24843) (Fission yeast).